The primary structure comprises 23 residues: Hongotoxin-4 (23 aa).

It belongs to the short scorpion toxin superfamily. Potassium channel inhibitor family. Alpha-KTx 02 subfamily. As to expression, expressed by the venom gland.

The protein resides in the secreted. Functionally, potent selective inhibitor of Kv1/KCNA voltage-gated potassium channels. The chain is Hongotoxin-4 from Centruroides limbatus (Bark scorpion).